We begin with the raw amino-acid sequence, 290 residues long: 7-methylguanosine phosphate-specific 5'-nucleotidase B (290 aa).

The active-site Nucleophile is the aspartate 39. Aspartate 39 and aspartate 41 together coordinate Mg(2+). Catalysis depends on aspartate 41, which acts as the Proton donor. Position 86 (glutamate 86) interacts with CMP. Residue glutamate 86 coordinates N(7)-methyl-GMP. Residues 154–155 (SA) and lysine 203 contribute to the substrate site. Aspartate 228 lines the Mg(2+) pocket.

The protein belongs to the pyrimidine 5'-nucleotidase family. Monomer.

It is found in the cytoplasm. It catalyses the reaction N(7)-methyl-GMP + H2O = N(7)-methylguanosine + phosphate. The enzyme catalyses CMP + H2O = cytidine + phosphate. The catalysed reaction is a ribonucleoside 5'-phosphate + H2O = a ribonucleoside + phosphate. Specifically hydrolyzes 7-methylguanosine monophosphate (m(7)GMP) to 7-methylguanosine and inorganic phosphate. The specific activity for m(7)GMP may protect cells against undesired salvage of m(7)GMP and its incorporation into nucleic acids. Also has weak activity for CMP. UMP and purine nucleotides are poor substrates. This chain is 7-methylguanosine phosphate-specific 5'-nucleotidase B (Nt5c3b-b), found in Xenopus laevis (African clawed frog).